A 253-amino-acid polypeptide reads, in one-letter code: Methionine aminopeptidase (253 aa).

Substrate is bound at residue histidine 78. A divalent metal cation is bound by residues aspartate 95, aspartate 106, and histidine 169. Histidine 176 serves as a coordination point for substrate. Positions 206 and 237 each coordinate a divalent metal cation.

It belongs to the peptidase M24A family. Methionine aminopeptidase type 1 subfamily. In terms of assembly, monomer. Co(2+) serves as cofactor. The cofactor is Zn(2+). It depends on Mn(2+) as a cofactor. Fe(2+) is required as a cofactor.

It catalyses the reaction Release of N-terminal amino acids, preferentially methionine, from peptides and arylamides.. In terms of biological role, removes the N-terminal methionine from nascent proteins. The N-terminal methionine is often cleaved when the second residue in the primary sequence is small and uncharged (Met-Ala-, Cys, Gly, Pro, Ser, Thr, or Val). Requires deformylation of the N(alpha)-formylated initiator methionine before it can be hydrolyzed. This Helicobacter pylori (strain J99 / ATCC 700824) (Campylobacter pylori J99) protein is Methionine aminopeptidase.